Reading from the N-terminus, the 1133-residue chain is Lon protease homolog, mitochondrial (1133 aa).

Residues 1-37 (MLRTRTTKTLSTVARTTRAIQYYRSIAKTAAVSQRRF) constitute a mitochondrion transit peptide. A propeptide spans 38 to 98 (ASTLTVRDVE…ATNSGKSILA (61 aa)) (removed in mature form; by autocatalysis). Basic and acidic residues-rich tracts occupy residues 98-117 (AKDDSTSQKKDEDVKIVPDE) and 125-143 (EPTRDDEIVNKDQEGEASK). 2 disordered regions span residues 98 to 176 (AKDD…KDVP) and 282 to 358 (ELFP…LDDI). Low complexity predominate over residues 145-166 (SRSSASGGGQSSSSRSDSGDGS). The Lon N-terminal domain occupies 182–480 (MLALPIARRP…KSLLVLKKEL (299 aa)). 2 stretches are compositionally biased toward basic and acidic residues: residues 282–301 (ELFPPNEEKEKSKEQAKDTD) and 325–340 (KLEDIVVERIPDSELQ). Over residues 348 to 358 (TEEESEELDDI) the composition is skewed to acidic residues. ATP is bound at residue 632 to 639 (GPPGVGKT). A dispensable for catalytic activity region spans residues 839-892 (KKLSIEDSPTSSADSKPKESVSSEEKAENNAKSSSEKTKDNNSEKTSDDIEALK). The segment at 844-889 (EDSPTSSADSKPKESVSSEEKAENNAKSSSEKTKDNNSEKTSDDIE) is disordered. Residues 853–889 (SKPKESVSSEEKAENNAKSSSEKTKDNNSEKTSDDIE) are compositionally biased toward basic and acidic residues. The Lon proteolytic domain maps to 923–1109 (TTPPGVVMGL…NDIFQKLFKD (187 aa)). Catalysis depends on residues Ser-1015 and Lys-1058.

It belongs to the peptidase S16 family. In terms of assembly, homohexamer. Organized in a ring with a central cavity. The ATP-binding and proteolytic domains (AP-domain) form a hexameric chamber. Oligomerization is independent of its proteolytic activity and the autocatalytic maturation of its subunits.

It is found in the mitochondrion matrix. The enzyme catalyses Hydrolysis of proteins in presence of ATP.. In terms of biological role, ATP-dependent serine protease that mediates the selective degradation of misfolded, unassembled or oxidatively damaged polypeptides as well as certain short-lived regulatory proteins in the mitochondrial matrix. May also have a chaperone function in the assembly of inner membrane protein complexes. Participates in the regulation of mitochondrial gene expression and in the maintenance of the integrity of the mitochondrial genome. Binds to mitochondrial DNA in a site-specific manner. Endogenous substrates include ABF2, ACO2, ILV1, ILV2, LSC1, LYS4, MGM101 and several oxidized proteins. The 2 nucleic acid-binding proteins ABF2 and MGM101 are protected from degradation by PIM1 when they are bound to DNA. This Saccharomyces cerevisiae (strain ATCC 204508 / S288c) (Baker's yeast) protein is Lon protease homolog, mitochondrial.